Consider the following 293-residue polypeptide: Phosphatidylserine decarboxylase proenzyme (293 aa).

Residues Asp90, His147, and Ser254 each act as charge relay system; for autoendoproteolytic cleavage activity in the active site. Ser254 acts as the Schiff-base intermediate with substrate; via pyruvic acid; for decarboxylase activity in catalysis. The residue at position 254 (Ser254) is a Pyruvic acid (Ser); by autocatalysis.

This sequence belongs to the phosphatidylserine decarboxylase family. PSD-B subfamily. Prokaryotic type I sub-subfamily. In terms of assembly, heterodimer of a large membrane-associated beta subunit and a small pyruvoyl-containing alpha subunit. Requires pyruvate as cofactor. Post-translationally, is synthesized initially as an inactive proenzyme. Formation of the active enzyme involves a self-maturation process in which the active site pyruvoyl group is generated from an internal serine residue via an autocatalytic post-translational modification. Two non-identical subunits are generated from the proenzyme in this reaction, and the pyruvate is formed at the N-terminus of the alpha chain, which is derived from the carboxyl end of the proenzyme. The autoendoproteolytic cleavage occurs by a canonical serine protease mechanism, in which the side chain hydroxyl group of the serine supplies its oxygen atom to form the C-terminus of the beta chain, while the remainder of the serine residue undergoes an oxidative deamination to produce ammonia and the pyruvoyl prosthetic group on the alpha chain. During this reaction, the Ser that is part of the protease active site of the proenzyme becomes the pyruvoyl prosthetic group, which constitutes an essential element of the active site of the mature decarboxylase.

The protein localises to the cell membrane. It carries out the reaction a 1,2-diacyl-sn-glycero-3-phospho-L-serine + H(+) = a 1,2-diacyl-sn-glycero-3-phosphoethanolamine + CO2. It functions in the pathway phospholipid metabolism; phosphatidylethanolamine biosynthesis; phosphatidylethanolamine from CDP-diacylglycerol: step 2/2. Catalyzes the formation of phosphatidylethanolamine (PtdEtn) from phosphatidylserine (PtdSer). The polypeptide is Phosphatidylserine decarboxylase proenzyme (Yersinia enterocolitica serotype O:8 / biotype 1B (strain NCTC 13174 / 8081)).